Here is a 978-residue protein sequence, read N- to C-terminus: Chaperone protein ClpB2, chloroplastic (978 aa).

A chloroplast-targeting transit peptide spans 1–76 (MAAAPPLAAG…RMPPRTLSVR (76 aa)). The Clp R domain occupies 85–229 (TQQEFTEMAW…KTAIESIRGK (145 aa)). 2 repeat regions span residues 89–154 (FTEM…IQRQ) and 166–229 (LGRD…IRGK). Positions 244 to 492 (LDKYGKDLTA…KLKMEITSKP (249 aa)) are i. Residues 289–296 (GEPGVGKT) and 692–699 (GPTGVGKT) each bind ATP. Positions 618 to 809 (VTQDDIAEIV…IIIMTSNVGS (192 aa)) are II.

Belongs to the ClpA/ClpB family.

It is found in the plastid. The protein resides in the chloroplast. In terms of biological role, molecular chaperone that may play a role in chloroplast development. The chain is Chaperone protein ClpB2, chloroplastic (CLPB2) from Oryza sativa subsp. japonica (Rice).